Here is a 211-residue protein sequence, read N- to C-terminus: Stromal cell-derived factor 2 (211 aa).

Positions 1–18 (MAVVSLLLFGGLWSAVGS) are cleaved as a signal peptide. MIR domains are found at residues 21 to 75 (LAVV…IRGK), 83 to 138 (GTPI…VLCN), and 139 to 193 (GPYW…AMEG).

The protein resides in the secreted. The protein is Stromal cell-derived factor 2 (SDF2) of Bos taurus (Bovine).